A 178-amino-acid polypeptide reads, in one-letter code: Beta-lytic metalloendopeptidase (178 aa).

Cysteines 65 and 111 form a disulfide. The Zn(2+) site is built by histidine 120 and histidine 122. The cysteines at positions 155 and 168 are disulfide-linked.

Belongs to the peptidase M23A family. Zn(2+) serves as cofactor.

It catalyses the reaction Cleavage of N-acetylmuramoyl-|-Ala, and of the insulin B chain at 23-Gly-|-Phe-24 &gt; 18-Val-|-Cys(SO3H).. The polypeptide is Beta-lytic metalloendopeptidase (Lysobacter enzymogenes).